We begin with the raw amino-acid sequence, 652 residues long: Probable endo-1,3(4)-beta-glucanase AFUB_029980 (652 aa).

Residues 1 to 21 (MAPSSLLLSVGSLITSSLVSA) form the signal peptide. The 254-residue stretch at 36–289 (ESWQGESFIN…WAGNVFAEST (254 aa)) folds into the GH16 domain. N64 carries an N-linked (GlcNAc...) asparagine glycan. E145 functions as the Nucleophile in the catalytic mechanism. Catalysis depends on E150, which acts as the Proton donor. N-linked (GlcNAc...) asparagine glycans are attached at residues N200 and N208. Positions 379–423 (NTVATSAADHATPSSAETTTVPAATGAPSVSATEGGDSELESTST) are disordered. Residues 390–410 (TPSSAETTTVPAATGAPSVSA) are compositionally biased toward polar residues. N-linked (GlcNAc...) asparagine glycosylation is present at N453. Residues 509–551 (SEIPTAPPEPVSQAVSTGSFDDSDTAQGDSEEQGSIASASVAP) form a disordered region. Over residues 529 to 540 (DDSDTAQGDSEE) the composition is skewed to acidic residues. N630 carries the GPI-anchor amidated asparagine lipid modification. The propeptide at 631 to 652 (GANRMSVGLSGLIGVMFIAALA) is removed in mature form.

This sequence belongs to the glycosyl hydrolase 16 family.

The protein localises to the cell membrane. It carries out the reaction Endohydrolysis of (1-&gt;3)- or (1-&gt;4)-linkages in beta-D-glucans when the glucose residue whose reducing group is involved in the linkage to be hydrolyzed is itself substituted at C-3.. In terms of biological role, mixed-linked glucanase involved in the degradation of complex natural cellulosic substrates. This is Probable endo-1,3(4)-beta-glucanase AFUB_029980 from Aspergillus fumigatus (strain CBS 144.89 / FGSC A1163 / CEA10) (Neosartorya fumigata).